Here is a 429-residue protein sequence, read N- to C-terminus: Enolase (429 aa).

A (2R)-2-phosphoglycerate-binding site is contributed by Q163. Residue E205 is the Proton donor of the active site. D242, E286, and D313 together coordinate Mg(2+). K338, R367, S368, and K389 together coordinate (2R)-2-phosphoglycerate. K338 serves as the catalytic Proton acceptor.

It belongs to the enolase family. It depends on Mg(2+) as a cofactor.

It localises to the cytoplasm. The protein localises to the secreted. Its subcellular location is the cell surface. The enzyme catalyses (2R)-2-phosphoglycerate = phosphoenolpyruvate + H2O. Its pathway is carbohydrate degradation; glycolysis; pyruvate from D-glyceraldehyde 3-phosphate: step 4/5. Functionally, catalyzes the reversible conversion of 2-phosphoglycerate (2-PG) into phosphoenolpyruvate (PEP). It is essential for the degradation of carbohydrates via glycolysis. The polypeptide is Enolase (Thermoanaerobacter pseudethanolicus (strain ATCC 33223 / 39E) (Clostridium thermohydrosulfuricum)).